A 548-amino-acid polypeptide reads, in one-letter code: Chaperonin GroEL (548 aa).

ATP contacts are provided by residues 30-33, lysine 51, 87-91, glycine 415, 479-481, and aspartate 495; these read TLGP, DGTTT, and NAA.

The protein belongs to the chaperonin (HSP60) family. In terms of assembly, forms a cylinder of 14 subunits composed of two heptameric rings stacked back-to-back. Interacts with the co-chaperonin GroES. In terms of processing, UMPylated on a tyrosine residue by YdiU under ATP-limited conditions.

Its subcellular location is the cytoplasm. It catalyses the reaction ATP + H2O + a folded polypeptide = ADP + phosphate + an unfolded polypeptide.. Its activity is regulated as follows. UMPylation of the chaperone by YdiU negatively regulates its activity, facilitating Salmonella survival under ATP-limited conditions. Together with its co-chaperonin GroES, plays an essential role in assisting protein folding. The GroEL-GroES system forms a nano-cage that allows encapsulation of the non-native substrate proteins and provides a physical environment optimized to promote and accelerate protein folding. The chain is Chaperonin GroEL from Salmonella typhimurium (strain LT2 / SGSC1412 / ATCC 700720).